The sequence spans 822 residues: uncharacterized protein (822 aa).

The segment at 1–230 (MARGKRSTQR…NAAPLNKTDA (230 aa)) is disordered. S27 carries the post-translational modification Phosphoserine. Basic residues predominate over residues 34–44 (SKAKKNKKKLN). 3 positions are modified to phosphoserine: S47, S51, and S55. The residue at position 57 (Y57) is a Phosphotyrosine. The span at 61 to 70 (PEDDEVDEEV) shows a compositional bias: acidic residues. Positions 73 to 85 (VKKKPSKKSKKAK) are enriched in basic residues. Positions 92 to 106 (FADEQSVEEEEEEDS) are enriched in acidic residues. The residue at position 97 (S97) is a Phosphoserine. Residues 111–121 (RKNKKSSKKAS) are compositionally biased toward basic residues. Composition is skewed to acidic residues over residues 129-144 (LADD…EESE) and 163-172 (SEALDDGDIE). Phosphoserine is present on residues S137 and S163. 2 consecutive ABC transporter domains span residues 276-519 (LQVE…VQLA) and 594-809 (IKFQ…AKER). Residues 308–315 (APNGSGKS) and 627–634 (GPNGAGKT) each bind ATP.

It belongs to the ABC transporter superfamily.

It is found in the cytoplasm. This is an uncharacterized protein from Schizosaccharomyces pombe (strain 972 / ATCC 24843) (Fission yeast).